The following is a 258-amino-acid chain: Imidazole glycerol phosphate synthase subunit HisF (258 aa).

Active-site residues include Asp-11 and Asp-130.

It belongs to the HisA/HisF family. In terms of assembly, heterodimer of HisH and HisF.

It is found in the cytoplasm. The enzyme catalyses 5-[(5-phospho-1-deoxy-D-ribulos-1-ylimino)methylamino]-1-(5-phospho-beta-D-ribosyl)imidazole-4-carboxamide + L-glutamine = D-erythro-1-(imidazol-4-yl)glycerol 3-phosphate + 5-amino-1-(5-phospho-beta-D-ribosyl)imidazole-4-carboxamide + L-glutamate + H(+). It participates in amino-acid biosynthesis; L-histidine biosynthesis; L-histidine from 5-phospho-alpha-D-ribose 1-diphosphate: step 5/9. In terms of biological role, IGPS catalyzes the conversion of PRFAR and glutamine to IGP, AICAR and glutamate. The HisF subunit catalyzes the cyclization activity that produces IGP and AICAR from PRFAR using the ammonia provided by the HisH subunit. This chain is Imidazole glycerol phosphate synthase subunit HisF, found in Escherichia coli O7:K1 (strain IAI39 / ExPEC).